The chain runs to 992 residues: Aminopeptidase Q (992 aa).

Over 2-13 (GPPSSSGFYVSR) the chain is Cytoplasmic. A helical; Signal-anchor for type II membrane protein membrane pass occupies residues 14 to 34 (AVALLLAALAAALLLALAVLA). Over 35 to 992 (ALYGRCARVQ…RMTAWLRKNT (958 aa)) the chain is Extracellular. Residues 48-92 (LHHGGVPDAASSPRGTQEEQLPTWPPRPTREPAGTATPGHWRPPG) form a disordered region. An N-linked (GlcNAc...) asparagine glycan is attached at N133. E241 serves as a coordination point for substrate. Residues N262, N289, N347, and N361 are each glycosylated (N-linked (GlcNAc...) asparagine). Residue 380–384 (SAMEN) participates in substrate binding. H416 is a binding site for Zn(2+). The Proton acceptor role is filled by E417. The Zn(2+) site is built by H420 and E439. N489 is a glycosylation site (N-linked (GlcNAc...) asparagine). Y505 (proton donor) is an active-site residue. 7 N-linked (GlcNAc...) asparagine glycosylation sites follow: N584, N602, N609, N655, N811, N850, and N889.

This sequence belongs to the peptidase M1 family. The cofactor is Zn(2+). In terms of tissue distribution, expressed in skin. Expression levels do not differ between dark and light skin areas.

The protein resides in the membrane. Functionally, metalloprotease which may be important for placentation by regulating biological activity of key peptides at the embryo-maternal interface. Involved in coat pigmentation patterns. During skin development, may be required to establish the periodicity of tabby markings, initiating a pre-pattern at or before hair follicle development. The chain is Aminopeptidase Q (LVRN) from Acinonyx jubatus (Cheetah).